The sequence spans 166 residues: NAD(P)H-quinone oxidoreductase subunit I, chloroplastic (166 aa).

4Fe-4S ferredoxin-type domains are found at residues 55 to 84 and 95 to 124; these read GRIHFEFDKCIACEVCVRVCPIDLPVVDWK and LNYSIDFGICIFCGNCVEYCPTNCLSMTEE. Positions 64, 67, 70, 74, 104, 107, 110, and 114 each coordinate [4Fe-4S] cluster.

The protein belongs to the complex I 23 kDa subunit family. In terms of assembly, NDH is composed of at least 16 different subunits, 5 of which are encoded in the nucleus. It depends on [4Fe-4S] cluster as a cofactor.

Its subcellular location is the plastid. It localises to the chloroplast thylakoid membrane. The enzyme catalyses a plastoquinone + NADH + (n+1) H(+)(in) = a plastoquinol + NAD(+) + n H(+)(out). It carries out the reaction a plastoquinone + NADPH + (n+1) H(+)(in) = a plastoquinol + NADP(+) + n H(+)(out). Functionally, NDH shuttles electrons from NAD(P)H:plastoquinone, via FMN and iron-sulfur (Fe-S) centers, to quinones in the photosynthetic chain and possibly in a chloroplast respiratory chain. The immediate electron acceptor for the enzyme in this species is believed to be plastoquinone. Couples the redox reaction to proton translocation, and thus conserves the redox energy in a proton gradient. This chain is NAD(P)H-quinone oxidoreductase subunit I, chloroplastic, found in Calea megacephala.